The following is a 323-amino-acid chain: tRNA dimethylallyltransferase (323 aa).

18–25 (GPTASGKT) is a binding site for ATP. 20–25 (TASGKT) lines the substrate pocket. The interval 44 to 47 (DSAL) is interaction with substrate tRNA.

Belongs to the IPP transferase family. Monomer. Requires Mg(2+) as cofactor.

The catalysed reaction is adenosine(37) in tRNA + dimethylallyl diphosphate = N(6)-dimethylallyladenosine(37) in tRNA + diphosphate. Functionally, catalyzes the transfer of a dimethylallyl group onto the adenine at position 37 in tRNAs that read codons beginning with uridine, leading to the formation of N6-(dimethylallyl)adenosine (i(6)A). In Blochmanniella floridana, this protein is tRNA dimethylallyltransferase.